The following is a 269-amino-acid chain: Thiazole synthase (269 aa).

The Schiff-base intermediate with DXP role is filled by Lys-105. 1-deoxy-D-xylulose 5-phosphate contacts are provided by residues Gly-166, 192 to 193 (AG), and 214 to 215 (NT). Residues 245 to 269 (AMSAQDAAQPSTPVLGTPFWHHDHG) are disordered.

This sequence belongs to the ThiG family. As to quaternary structure, homotetramer. Forms heterodimers with either ThiH or ThiS.

It localises to the cytoplasm. The enzyme catalyses [ThiS sulfur-carrier protein]-C-terminal-Gly-aminoethanethioate + 2-iminoacetate + 1-deoxy-D-xylulose 5-phosphate = [ThiS sulfur-carrier protein]-C-terminal Gly-Gly + 2-[(2R,5Z)-2-carboxy-4-methylthiazol-5(2H)-ylidene]ethyl phosphate + 2 H2O + H(+). The protein operates within cofactor biosynthesis; thiamine diphosphate biosynthesis. Its function is as follows. Catalyzes the rearrangement of 1-deoxy-D-xylulose 5-phosphate (DXP) to produce the thiazole phosphate moiety of thiamine. Sulfur is provided by the thiocarboxylate moiety of the carrier protein ThiS. In vitro, sulfur can be provided by H(2)S. The chain is Thiazole synthase from Paracidovorax citrulli (strain AAC00-1) (Acidovorax citrulli).